A 515-amino-acid polypeptide reads, in one-letter code: 2-isopropylmalate synthase (515 aa).

The Pyruvate carboxyltransferase domain occupies 4-266; it reads IKFFDTTLRD…ETRLNLQEIK (263 aa). Aspartate 13, histidine 201, histidine 203, and asparagine 237 together coordinate Mn(2+). The regulatory domain stretch occupies residues 391–515; it reads QLSSIQVQYG…RAENEKVATS (125 aa).

It belongs to the alpha-IPM synthase/homocitrate synthase family. LeuA type 1 subfamily. Homodimer. Requires Mn(2+) as cofactor.

It is found in the cytoplasm. It carries out the reaction 3-methyl-2-oxobutanoate + acetyl-CoA + H2O = (2S)-2-isopropylmalate + CoA + H(+). It functions in the pathway amino-acid biosynthesis; L-leucine biosynthesis; L-leucine from 3-methyl-2-oxobutanoate: step 1/4. In terms of biological role, catalyzes the condensation of the acetyl group of acetyl-CoA with 3-methyl-2-oxobutanoate (2-ketoisovalerate) to form 3-carboxy-3-hydroxy-4-methylpentanoate (2-isopropylmalate). This chain is 2-isopropylmalate synthase, found in Geobacillus stearothermophilus (Bacillus stearothermophilus).